Consider the following 77-residue polypeptide: Subtilisin-chymotrypsin inhibitor CI-1C (77 aa).

The protein belongs to the protease inhibitor I13 (potato type I serine protease inhibitor) family.

Functionally, inhibits both subtilisin and chymotrypsin. The polypeptide is Subtilisin-chymotrypsin inhibitor CI-1C (Hordeum vulgare (Barley)).